A 260-amino-acid chain; its full sequence is Ribosomal RNA small subunit methyltransferase J (260 aa).

Residues 101–102, 117–118, 153–154, and Asp-176 contribute to the S-adenosyl-L-methionine site; these read RD, ER, and SS.

This sequence belongs to the methyltransferase superfamily. RsmJ family.

Its subcellular location is the cytoplasm. The catalysed reaction is guanosine(1516) in 16S rRNA + S-adenosyl-L-methionine = N(2)-methylguanosine(1516) in 16S rRNA + S-adenosyl-L-homocysteine + H(+). In terms of biological role, specifically methylates the guanosine in position 1516 of 16S rRNA. The protein is Ribosomal RNA small subunit methyltransferase J of Aliivibrio salmonicida (strain LFI1238) (Vibrio salmonicida (strain LFI1238)).